A 424-amino-acid chain; its full sequence is Serine--tRNA ligase (424 aa).

229 to 231 is a binding site for L-serine; sequence TAE. Residues 259-261 and Val-275 each bind ATP; that span reads RKE. Glu-282 lines the L-serine pocket. Position 349–352 (349–352) interacts with ATP; that stretch reads EVTS. Thr-383 is a binding site for L-serine.

Belongs to the class-II aminoacyl-tRNA synthetase family. Type-1 seryl-tRNA synthetase subfamily. In terms of assembly, homodimer. The tRNA molecule binds across the dimer.

Its subcellular location is the cytoplasm. The enzyme catalyses tRNA(Ser) + L-serine + ATP = L-seryl-tRNA(Ser) + AMP + diphosphate + H(+). It carries out the reaction tRNA(Sec) + L-serine + ATP = L-seryl-tRNA(Sec) + AMP + diphosphate + H(+). It functions in the pathway aminoacyl-tRNA biosynthesis; selenocysteinyl-tRNA(Sec) biosynthesis; L-seryl-tRNA(Sec) from L-serine and tRNA(Sec): step 1/1. Catalyzes the attachment of serine to tRNA(Ser). Is also able to aminoacylate tRNA(Sec) with serine, to form the misacylated tRNA L-seryl-tRNA(Sec), which will be further converted into selenocysteinyl-tRNA(Sec). This is Serine--tRNA ligase from Borrelia recurrentis (strain A1).